A 101-amino-acid chain; its full sequence is Small ribosomal subunit protein uS14 (101 aa).

This sequence belongs to the universal ribosomal protein uS14 family. Part of the 30S ribosomal subunit. Contacts proteins S3 and S10.

Its function is as follows. Binds 16S rRNA, required for the assembly of 30S particles and may also be responsible for determining the conformation of the 16S rRNA at the A site. The protein is Small ribosomal subunit protein uS14 of Acinetobacter baumannii (strain AB307-0294).